The primary structure comprises 822 residues: ATP-dependent zinc metalloprotease FTSH 7, chloroplastic (822 aa).

Composition is skewed to low complexity over residues 1–34, 80–94, and 101–122; these read MASA…RRAS, AEAS…SSSG, and AAAA…AAAT. 2 disordered regions span residues 1–44 and 67–136; these read MASA…ASVR and PAAR…ENKW. The N-terminal 70 residues, 1–70, are a transit peptide targeting the chloroplast; it reads MASASAAAET…RVLRRPPAAR (70 aa). The next 2 helical transmembrane spans lie at 154-174 and 288-308; these read IVQG…IFAL and GGLL…AVVL. Residue 386-393 participates in ATP binding; that stretch reads GLPGTGKT. His-611 contributes to the Zn(2+) binding site. Residue Glu-612 is part of the active site. His-615 and Asp-694 together coordinate Zn(2+).

It in the N-terminal section; belongs to the AAA ATPase family. The protein in the C-terminal section; belongs to the peptidase M41 family. Zn(2+) is required as a cofactor.

The protein resides in the plastid. The protein localises to the chloroplast thylakoid membrane. Functionally, probable ATP-dependent zinc metallopeptidase. This is ATP-dependent zinc metalloprotease FTSH 7, chloroplastic (FTSH7) from Oryza sativa subsp. japonica (Rice).